Consider the following 325-residue polypeptide: Beta-ketoacyl-[acyl-carrier-protein] synthase III (325 aa).

Active-site residues include C119 and H252. The segment at 253–257 is ACP-binding; it reads QANLR. Residue N282 is part of the active site.

The protein belongs to the thiolase-like superfamily. FabH family. Homodimer.

The protein resides in the cytoplasm. The enzyme catalyses malonyl-[ACP] + acetyl-CoA + H(+) = 3-oxobutanoyl-[ACP] + CO2 + CoA. It participates in lipid metabolism; fatty acid biosynthesis. Functionally, catalyzes the condensation reaction of fatty acid synthesis by the addition to an acyl acceptor of two carbons from malonyl-ACP. Catalyzes the first condensation reaction which initiates fatty acid synthesis and may therefore play a role in governing the total rate of fatty acid production. Possesses both acetoacetyl-ACP synthase and acetyl transacylase activities. Its substrate specificity determines the biosynthesis of branched-chain and/or straight-chain of fatty acids. This Polaromonas naphthalenivorans (strain CJ2) protein is Beta-ketoacyl-[acyl-carrier-protein] synthase III.